Reading from the N-terminus, the 780-residue chain is Alpha-xylosidase (780 aa).

N-linked (GlcNAc...) asparagine glycosylation is found at N48, N84, N247, and N298. Residues D434 and E437 contribute to the active site. N443 carries an N-linked (GlcNAc...) asparagine glycan. D501 serves as the catalytic Proton donor. N-linked (GlcNAc...) asparagine glycosylation is present at N718.

This sequence belongs to the glycosyl hydrolase 31 family.

The protein resides in the secreted. The enzyme catalyses Hydrolysis of terminal, non-reducing alpha-D-xylose residues with release of alpha-D-xylose.. Its function is as follows. Catalyzes the liberation of alpha-xylose from the non-reducing terminal glucose of xyloglucan oligosaccharides. This Emericella nidulans (strain FGSC A4 / ATCC 38163 / CBS 112.46 / NRRL 194 / M139) (Aspergillus nidulans) protein is Alpha-xylosidase.